A 419-amino-acid polypeptide reads, in one-letter code: Gamma-glutamyl phosphate reductase (419 aa).

It belongs to the gamma-glutamyl phosphate reductase family.

The protein resides in the cytoplasm. The catalysed reaction is L-glutamate 5-semialdehyde + phosphate + NADP(+) = L-glutamyl 5-phosphate + NADPH + H(+). It participates in amino-acid biosynthesis; L-proline biosynthesis; L-glutamate 5-semialdehyde from L-glutamate: step 2/2. Catalyzes the NADPH-dependent reduction of L-glutamate 5-phosphate into L-glutamate 5-semialdehyde and phosphate. The product spontaneously undergoes cyclization to form 1-pyrroline-5-carboxylate. This is Gamma-glutamyl phosphate reductase from Gloeobacter violaceus (strain ATCC 29082 / PCC 7421).